Consider the following 339-residue polypeptide: Probable N5-carboxyaminoimidazole ribonucleotide mutase (339 aa).

The substrate site is built by Ser-11, Asp-14, and Arg-41.

Belongs to the AIR carboxylase family. Class I subfamily.

It catalyses the reaction 5-carboxyamino-1-(5-phospho-D-ribosyl)imidazole + H(+) = 5-amino-1-(5-phospho-D-ribosyl)imidazole-4-carboxylate. It functions in the pathway purine metabolism; IMP biosynthesis via de novo pathway; 5-amino-1-(5-phospho-D-ribosyl)imidazole-4-carboxylate from 5-amino-1-(5-phospho-D-ribosyl)imidazole (N5-CAIR route): step 2/2. Catalyzes the conversion of N5-carboxyaminoimidazole ribonucleotide (N5-CAIR) to 4-carboxy-5-aminoimidazole ribonucleotide (CAIR). The chain is Probable N5-carboxyaminoimidazole ribonucleotide mutase from Methanobrevibacter smithii.